A 164-amino-acid chain; its full sequence is Lipoprotein signal peptidase (164 aa).

A run of 3 helical transmembrane segments spans residues 12–32, 70–90, and 102–122; these read WLWL…LILQ, WFFA…MYRS, and ALII…GFVV. Active-site residues include D123 and D141. The helical transmembrane segment at 137–157 threads the bilayer; the sequence is FNLADTAICVGAALIVLEGFL.

Belongs to the peptidase A8 family.

It is found in the cell inner membrane. It carries out the reaction Release of signal peptides from bacterial membrane prolipoproteins. Hydrolyzes -Xaa-Yaa-Zaa-|-(S,diacylglyceryl)Cys-, in which Xaa is hydrophobic (preferably Leu), and Yaa (Ala or Ser) and Zaa (Gly or Ala) have small, neutral side chains.. The protein operates within protein modification; lipoprotein biosynthesis (signal peptide cleavage). Its function is as follows. This protein specifically catalyzes the removal of signal peptides from prolipoproteins. This is Lipoprotein signal peptidase from Shigella sonnei (strain Ss046).